The chain runs to 378 residues: Serpin B6 (378 aa).

Methionine 1 bears the N-acetylmethionine mark. Lysine 196 is subject to N6-acetyllysine.

It belongs to the serpin family. Ov-serpin subfamily. In terms of assembly, forms a complex with the monomeric form of beta-tryptase. As to expression, brain.

It localises to the cytoplasm. In terms of biological role, inhibitor of cathepsin G, kallikrein-8 and thrombin. May play an important role in the inner ear in the protection against leakage of lysosomal content during stress. May be involved in the regulation of serine proteinases present in the brain or extravasated from the blood. In Bos taurus (Bovine), this protein is Serpin B6 (SERPINB6).